A 143-amino-acid chain; its full sequence is Large ribosomal subunit protein uL11 (143 aa).

It belongs to the universal ribosomal protein uL11 family. As to quaternary structure, part of the ribosomal stalk of the 50S ribosomal subunit. Interacts with L10 and the large rRNA to form the base of the stalk. L10 forms an elongated spine to which L12 dimers bind in a sequential fashion forming a multimeric L10(L12)X complex. Post-translationally, one or more lysine residues are methylated.

Forms part of the ribosomal stalk which helps the ribosome interact with GTP-bound translation factors. In Cutibacterium acnes (strain DSM 16379 / KPA171202) (Propionibacterium acnes), this protein is Large ribosomal subunit protein uL11.